The chain runs to 247 residues: Pulmonary surfactant-associated protein A (247 aa).

Residues 1–15 (MLLLSLALTLISAPA) form the signal peptide. The Collagen-like domain occupies 27-99 (GSPGIPGTPG…PGERGPPGLP (73 aa)). A 4-hydroxyproline mark is found at Pro-29, Pro-32, Pro-35, Pro-41, Pro-53, Pro-56, Pro-62, Pro-66, and Pro-69. Residues 30 to 100 (GIPGTPGSHG…GERGPPGLPA (71 aa)) form a disordered region. A compositionally biased stretch (basic and acidic residues) spans 41–50 (PGRDGRDGVK). Residues 53–64 (PGPPGPMGPPGG) are compositionally biased toward pro residues. A compositionally biased stretch (basic and acidic residues) spans 83–92 (ERGDKGEPGE). Positions 132–247 (AVGEKIFSTN…LQYRLVICEF (116 aa)) constitute a C-type lectin domain. Cystine bridges form between Cys-154–Cys-245 and Cys-223–Cys-237. A glycan (N-linked (GlcNAc...) asparagine) is linked at Asn-206. Positions 214, 216, 233, and 234 each coordinate Ca(2+).

Belongs to the SFTPA family. Oligomeric complex of 6 set of homotrimers.

The protein localises to the secreted. It is found in the extracellular space. It localises to the extracellular matrix. Its subcellular location is the surface film. In presence of calcium ions, it binds to surfactant phospholipids and contributes to lower the surface tension at the air-liquid interface in the alveoli of the mammalian lung and is essential for normal respiration. Enhances the expression of MYO18A/SP-R210 on alveolar macrophages. The protein is Pulmonary surfactant-associated protein A (SFTPA1) of Oryctolagus cuniculus (Rabbit).